A 764-amino-acid polypeptide reads, in one-letter code: Polymeric immunoglobulin receptor (764 aa).

Positions 1 to 18 (MLLFVLTCLLAVFPAIST) are cleaved as a signal peptide. The Ig-like V-type 1; required for binding to polymeric IgA and IgM domain maps to 19 to 120 (KSPIFGPEEV…GLGINSRGLS (102 aa)). Topologically, residues 19–638 (KSPIFGPEEV…SSEEQGGSSR (620 aa)) are extracellular. 2 disulfide bridges follow: Cys40–Cys110 and Cys56–Cys64. N-linked (GlcNAc...) asparagine glycosylation is found at Asn83, Asn90, Asn135, and Asn186. 4 consecutive Ig-like V-type domains span residues 145–237 (GRTV…DLQV), 250–352 (RGSV…ESTI), 364–458 (GGSV…IKII), and 462–561 (PNLK…VYVA). 5 disulfides stabilise this stretch: Cys152–Cys220, Cys257–Cys325, Cys271–Cys279, Cys371–Cys441, and Cys385–Cys395. Asn421 carries an N-linked (GlcNAc...) asparagine glycan. The N-linked (GlcNAc...) (complex) asparagine glycan is linked to Asn469. Cystine bridges form between Cys482/Cys544, Cys486/Cys520, and Cys496/Cys503. N-linked (GlcNAc...) asparagine glycosylation occurs at Asn499. Residues 609–619 (KAVADTRDQAD) are compositionally biased toward basic and acidic residues. The disordered stretch occupies residues 609–637 (KAVADTRDQADGSRASVDSGSSEEQGGSS). The span at 627-637 (SGSSEEQGGSS) shows a compositional bias: low complexity. The helical transmembrane segment at 639–661 (ALVSTLVPLGLVLAVGAVAVGVA) threads the bilayer. The Cytoplasmic segment spans residues 662-764 (RARHRKNVDR…AEAQDGPQEA (103 aa)). Phosphoserine occurs at positions 673, 682, 689, and 735. Residues 717–738 (ATTESTTETKEPKKAKRSSKEE) form a disordered region. The segment covering 723-738 (TETKEPKKAKRSSKEE) has biased composition (basic and acidic residues).

As to quaternary structure, interacts (mainly via CDR1-like domain) with dimeric IgA. Interacts (mainly via CDR2-like domain) with pentameric IgM. Either free or part of the secretory IgA (sIgA) complex that consists of two, four or five IgA monomers, and two additional non-Ig polypeptides, namely the JCHAIN and the secretory component (the proteolytic product of PIGR). Free secretory component interacts with bacterial antigens toxA of C.difficile and eaeA of E.coli. N-glycosylated. N-glycosylation is required for anchoring IgA molecules to mucus, but is not necessary for Ig binding.

The protein localises to the cell membrane. It is found in the secreted. Functionally, mediates selective transcytosis of polymeric IgA and IgM across mucosal epithelial cells. Binds polymeric IgA and IgM at the basolateral surface of epithelial cells. The complex is then transported across the cell to be secreted at the apical surface. During this process, a cleavage occurs that separates the extracellular (known as the secretory component) from the transmembrane segment. Through its N-linked glycans ensures anchoring of secretory IgA (sIgA) molecules to mucus lining the epithelial surface to neutralize extracellular pathogens. On its own (free form) may act as a non-specific microbial scavenger to prevent pathogen interaction with epithelial cells. The polypeptide is Polymeric immunoglobulin receptor (PIGR) (Homo sapiens (Human)).